We begin with the raw amino-acid sequence, 285 residues long: NAD kinase (285 aa).

D66 (proton acceptor) is an active-site residue. NAD(+) contacts are provided by residues 66 to 67, 137 to 138, R148, R165, D167, and 178 to 183; these read DG, ND, and TAYSMS.

Belongs to the NAD kinase family. Requires a divalent metal cation as cofactor.

The protein localises to the cytoplasm. It carries out the reaction NAD(+) + ATP = ADP + NADP(+) + H(+). Functionally, involved in the regulation of the intracellular balance of NAD and NADP, and is a key enzyme in the biosynthesis of NADP. Catalyzes specifically the phosphorylation on 2'-hydroxyl of the adenosine moiety of NAD to yield NADP. The protein is NAD kinase of Chlorobium luteolum (strain DSM 273 / BCRC 81028 / 2530) (Pelodictyon luteolum).